Consider the following 150-residue polypeptide: D-aminoacyl-tRNA deacylase (150 aa).

The Gly-cisPro motif, important for rejection of L-amino acids motif lies at 138–139 (GP).

It belongs to the DTD family. Homodimer.

The protein localises to the cytoplasm. It carries out the reaction glycyl-tRNA(Ala) + H2O = tRNA(Ala) + glycine + H(+). The enzyme catalyses a D-aminoacyl-tRNA + H2O = a tRNA + a D-alpha-amino acid + H(+). Functionally, an aminoacyl-tRNA editing enzyme that deacylates mischarged D-aminoacyl-tRNAs. Also deacylates mischarged glycyl-tRNA(Ala), protecting cells against glycine mischarging by AlaRS. Acts via tRNA-based rather than protein-based catalysis; rejects L-amino acids rather than detecting D-amino acids in the active site. By recycling D-aminoacyl-tRNA to D-amino acids and free tRNA molecules, this enzyme counteracts the toxicity associated with the formation of D-aminoacyl-tRNA entities in vivo and helps enforce protein L-homochirality. In Christiangramia forsetii (strain DSM 17595 / CGMCC 1.15422 / KT0803) (Gramella forsetii), this protein is D-aminoacyl-tRNA deacylase.